The sequence spans 334 residues: 4-hydroxy-2-methyl-3-oxo-4-farnesyl-3,4-dihydroquinoline-1-oxide ketoreductase (334 aa).

Tyrosine 139 serves as the catalytic Proton donor.

The protein belongs to the 3-beta-HSD family.

It catalyses the reaction aurachin B + NAD(+) + H2O = 4-hydroxy-2-methyl-3-oxo-4-[(2E,6E)-farnesyl]-3,4-dihydroquinoline 1-oxide + NADH. The enzyme catalyses 3,4-dihydroxy-2-methyl-4-[(2E,6E)-farnesyl]-3,4-dihydroquinoline 1-oxide + NAD(+) = 4-hydroxy-2-methyl-3-oxo-4-[(2E,6E)-farnesyl]-3,4-dihydroquinoline 1-oxide + NADH + H(+). In terms of biological role, ketoreductase that catalyzes the final step in the conversion of aurachin C to aurachin B. Catalyzes the reduction of 4-hydroxy-2-methyl-3-oxo-4-[(2E,6E)-farnesyl]-3,4-dihydroquinoline-1-oxide to form 3,4-dihydroxy-2-methyl-4-[(2E,6E)-farnesyl]-3,4-dihydroquinoline 1-oxide, which then undergoes a spontaneous dehydration to form aurachin B. Accepts both NADH and NADPH, but has a preference for NADH. The chain is 4-hydroxy-2-methyl-3-oxo-4-farnesyl-3,4-dihydroquinoline-1-oxide ketoreductase from Stigmatella aurantiaca.